The sequence spans 610 residues: UvrABC system protein C (610 aa).

The GIY-YIG domain occupies 16–94 (HQPGVYRMYN…IKQYLPKYNV (79 aa)). Residues 204 to 239 (QQVLKQLIEKMEVASQQLRFEDAAKFRDQIQAIRRV) enclose the UVR domain.

Belongs to the UvrC family. As to quaternary structure, interacts with UvrB in an incision complex.

Its subcellular location is the cytoplasm. Functionally, the UvrABC repair system catalyzes the recognition and processing of DNA lesions. UvrC both incises the 5' and 3' sides of the lesion. The N-terminal half is responsible for the 3' incision and the C-terminal half is responsible for the 5' incision. The protein is UvrABC system protein C of Vibrio parahaemolyticus serotype O3:K6 (strain RIMD 2210633).